The chain runs to 184 residues: ATP synthase subunit b, chloroplastic (184 aa).

The chain crosses the membrane as a helical span at residues 31-53 (LINLGIVISLLIYFGKGVLSNLL).

It belongs to the ATPase B chain family. F-type ATPases have 2 components, F(1) - the catalytic core - and F(0) - the membrane proton channel. F(1) has five subunits: alpha(3), beta(3), gamma(1), delta(1), epsilon(1). F(0) has four main subunits: a(1), b(1), b'(1) and c(10-14). The alpha and beta chains form an alternating ring which encloses part of the gamma chain. F(1) is attached to F(0) by a central stalk formed by the gamma and epsilon chains, while a peripheral stalk is formed by the delta, b and b' chains.

Its subcellular location is the plastid. It localises to the chloroplast thylakoid membrane. In terms of biological role, f(1)F(0) ATP synthase produces ATP from ADP in the presence of a proton or sodium gradient. F-type ATPases consist of two structural domains, F(1) containing the extramembraneous catalytic core and F(0) containing the membrane proton channel, linked together by a central stalk and a peripheral stalk. During catalysis, ATP synthesis in the catalytic domain of F(1) is coupled via a rotary mechanism of the central stalk subunits to proton translocation. Its function is as follows. Component of the F(0) channel, it forms part of the peripheral stalk, linking F(1) to F(0). The chain is ATP synthase subunit b, chloroplastic from Aneura mirabilis (Parasitic liverwort).